The following is a 582-amino-acid chain: Membrane protein insertase YidC (582 aa).

4 helical membrane passes run 4–24 (NTVL…YIQQ), 376–396 (IIPN…IIFF), 446–466 (ASGC…FGLF), and 542–562 (FMPL…LLFW).

The protein belongs to the OXA1/ALB3/YidC family. Type 1 subfamily. Interacts with the Sec translocase complex via SecD. Specifically interacts with transmembrane segments of nascent integral membrane proteins during membrane integration.

Its subcellular location is the cell inner membrane. Functionally, required for the insertion and/or proper folding and/or complex formation of integral membrane proteins into the membrane. Involved in integration of membrane proteins that insert both dependently and independently of the Sec translocase complex, as well as at least some lipoproteins. Aids folding of multispanning membrane proteins. The chain is Membrane protein insertase YidC from Treponema denticola (strain ATCC 35405 / DSM 14222 / CIP 103919 / JCM 8153 / KCTC 15104).